The following is a 114-amino-acid chain: Large ribosomal subunit protein uL22c (114 aa).

The protein belongs to the universal ribosomal protein uL22 family. As to quaternary structure, part of the 50S ribosomal subunit.

The protein localises to the plastid. It localises to the chloroplast. Functionally, this protein binds specifically to 23S rRNA. In terms of biological role, the globular domain of the protein is located near the polypeptide exit tunnel on the outside of the subunit, while an extended beta-hairpin is found that lines the wall of the exit tunnel in the center of the 70S ribosome. This is Large ribosomal subunit protein uL22c (rpl22) from Gracilaria tenuistipitata var. liui (Red alga).